Reading from the N-terminus, the 370-residue chain is tRNA-specific 2-thiouridylase MnmA (370 aa).

Residues 25-32 (ALSGGVDS) and Leu51 contribute to the ATP site. Catalysis depends on Cys112, which acts as the Nucleophile. A disulfide bridge connects residues Cys112 and Cys211. Gly137 is an ATP binding site. Positions 161 to 163 (KDQ) are interaction with tRNA. The Cysteine persulfide intermediate role is filled by Cys211. The interval 316–317 (RY) is interaction with tRNA.

The protein belongs to the MnmA/TRMU family.

The protein localises to the cytoplasm. It carries out the reaction S-sulfanyl-L-cysteinyl-[protein] + uridine(34) in tRNA + AH2 + ATP = 2-thiouridine(34) in tRNA + L-cysteinyl-[protein] + A + AMP + diphosphate + H(+). In terms of biological role, catalyzes the 2-thiolation of uridine at the wobble position (U34) of tRNA, leading to the formation of s(2)U34. The sequence is that of tRNA-specific 2-thiouridylase MnmA from Synechococcus sp. (strain JA-3-3Ab) (Cyanobacteria bacterium Yellowstone A-Prime).